A 1174-amino-acid chain; its full sequence is Pesticidal crystal protein Cry1Fa (1174 aa).

This sequence belongs to the delta endotoxin family.

Functionally, promotes colloidosmotic lysis by binding to the midgut epithelial cells of many lepidopteran larvae. In Bacillus thuringiensis subsp. aizawai, this protein is Pesticidal crystal protein Cry1Fa (cry1Fa).